A 280-amino-acid chain; its full sequence is Suppressor of disruption of TFIIS (280 aa).

The protein belongs to the SSM1 family.

Functionally, could be an enzyme that inactivates 6-azauracil by modifying it. This Saccharomyces cerevisiae (strain ATCC 204508 / S288c) (Baker's yeast) protein is Suppressor of disruption of TFIIS (SDT1).